A 328-amino-acid chain; its full sequence is tRNA dimethylallyltransferase (328 aa).

19–26 contacts ATP; that stretch reads GPTASGKT. Residue 21 to 26 coordinates substrate; the sequence is TASGKT. 3 interaction with substrate tRNA regions span residues 50-53, 174-178, and 257-262; these read DSAL, QRIQR, and RCVGYR.

Belongs to the IPP transferase family. As to quaternary structure, monomer. Requires Mg(2+) as cofactor.

It carries out the reaction adenosine(37) in tRNA + dimethylallyl diphosphate = N(6)-dimethylallyladenosine(37) in tRNA + diphosphate. Its function is as follows. Catalyzes the transfer of a dimethylallyl group onto the adenine at position 37 in tRNAs that read codons beginning with uridine, leading to the formation of N6-(dimethylallyl)adenosine (i(6)A). The sequence is that of tRNA dimethylallyltransferase from Leptothrix cholodnii (strain ATCC 51168 / LMG 8142 / SP-6) (Leptothrix discophora (strain SP-6)).